A 135-amino-acid chain; its full sequence is Small ribosomal subunit protein uS11 (135 aa).

It belongs to the universal ribosomal protein uS11 family. As to quaternary structure, part of the 30S ribosomal subunit. Interacts with proteins S7 and S18. Binds to IF-3.

In terms of biological role, located on the platform of the 30S subunit, it bridges several disparate RNA helices of the 16S rRNA. Forms part of the Shine-Dalgarno cleft in the 70S ribosome. The protein is Small ribosomal subunit protein uS11 of Protochlamydia amoebophila (strain UWE25).